A 277-amino-acid polypeptide reads, in one-letter code: Phycobilisome rod-core linker polypeptide CpcG1 (277 aa).

One can recognise a PBS-linker domain in the interval 11-189; the sequence is RTLDQRVVSY…YWRNKEISLS (179 aa).

Belongs to the phycobilisome linker protein family. In terms of assembly, the phycobilisome is a hemidiscoidal structure that is composed of two distinct substructures: a core complex and a number of rods radiating from the core.

It localises to the cellular thylakoid membrane. Rod-core linker protein required for attachment of phycocyanin to allophycocyanin in cores of phycobilisomes. In terms of biological role, linker polypeptides determine the state of aggregation and the location of the disk-shaped phycobiliprotein units within the phycobilisome and modulate their spectroscopic properties in order to mediate a directed and optimal energy transfer. In Thermosynechococcus vestitus (strain NIES-2133 / IAM M-273 / BP-1), this protein is Phycobilisome rod-core linker polypeptide CpcG1 (cpcG1).